The primary structure comprises 301 residues: Ribonuclease Z (301 aa).

7 residues coordinate Zn(2+): H61, H63, D65, H66, H140, D211, and H269. D65 serves as the catalytic Proton acceptor.

This sequence belongs to the RNase Z family. In terms of assembly, homodimer. The cofactor is Zn(2+).

It catalyses the reaction Endonucleolytic cleavage of RNA, removing extra 3' nucleotides from tRNA precursor, generating 3' termini of tRNAs. A 3'-hydroxy group is left at the tRNA terminus and a 5'-phosphoryl group is left at the trailer molecule.. Zinc phosphodiesterase, which displays some tRNA 3'-processing endonuclease activity. Probably involved in tRNA maturation, by removing a 3'-trailer from precursor tRNA. The protein is Ribonuclease Z of Bradyrhizobium diazoefficiens (strain JCM 10833 / BCRC 13528 / IAM 13628 / NBRC 14792 / USDA 110).